The primary structure comprises 202 residues: Type II restriction enzyme MthZI (202 aa).

It carries out the reaction Endonucleolytic cleavage of DNA to give specific double-stranded fragments with terminal 5'-phosphates.. In terms of biological role, a P subtype restriction enzyme that recognizes the double-stranded sequence 5'-CTAG-3' and cleaves after C-1. The polypeptide is Type II restriction enzyme MthZI (Methanothermobacter thermautotrophicus (Methanobacterium thermoformicicum)).